The primary structure comprises 123 residues: TYMS opposite strand protein (123 aa).

Residues 57–111 form a disordered region; sequence MRPLPRRIEVRTKRGPQRPAAPERSPQPRLPPSRHPSRRGPRRHLSGCSAPACRI. Positions 91–101 are enriched in basic residues; it reads HPSRRGPRRHL.

In Homo sapiens (Human), this protein is TYMS opposite strand protein (TYMSOS).